A 654-amino-acid chain; its full sequence is Pentatricopeptide repeat-containing protein At3g16610 (654 aa).

PPR repeat units follow at residues 1–32 (MFLS…SLTL), 34–64 (SSTV…IPHP), 67–101 (NPIA…GVRP), 102–136 (TKYT…DFAT), 137–171 (DMYV…DMVA), 172–203 (WNAM…GLSP), 204–238 (NLST…GFSN), 239–269 (DLVV…DFKK), 270–304 (NEVT…DNVA), 307–341 (TPVA…GFIL), 342–372 (DLTV…IGLK), 373–407 (DVIS…GIRP), 408–442 (DITT…GYAV), 443–473 (NTSI…MHKR), 474–508 (DIVS…GVNP), 509–543 (DEVT…DFNV), and 546–576 (RIDH…MPFE). The tract at residues 581–654 (VLGTLLSACW…KTPGYSWVDV (74 aa)) is type E motif; degenerate.

This sequence belongs to the PPR family. PCMP-E subfamily.

The chain is Pentatricopeptide repeat-containing protein At3g16610 (PCMP-E91) from Arabidopsis thaliana (Mouse-ear cress).